The following is a 613-amino-acid chain: MEKPVLQTQPSMLPFFDTAHAVNLLRGIHELRAERKFFDVTLCAEGKEFHCHRTVLAAASMYFRAMFAGTLRESVMDRVVLHEVSAELLGLLVDFCYTGRVTVTHDNVDLLLKTADLFQFPSVKEACCAFLEQRLDVSNCLEIQDFAEAYACRELAASARRFVLKNIVELAKSMDFERLSWKRLLEFVSDDGLCVDKEETAYQIAVRWVKADLQHRLHYWPELLQQVRLPFVRRFYLLAHVESDPLVYLSPACLRLVSEARSFQSYEYDRHDRPGHRMRPRPSTGLAEILVVVGGCDQDCDELVTVDCYNPQTGQWRYLAEFPDHLGGGYSIAALGNDIYVTGGSDGSRLYDCVWRYNSSVNEWTEVSPMLKAREYHSSCVLKGQLYVVGSDSTERYDHTIDCWEALPPMPHPMDNCSTTACRGRLYAIGSLTGEDTMAIQCYDAESNRWSLLNSGELPPWSFAPKSVTLNGLIYFVRDDSAEVDVYNPQKNEWDKISPMTQVHVGGSVSALGGRLYVSGGYDNTFELSDVVEVYDPSSRSWSPAGRLPQPTFWHGSVSIFRQFMPLVQSTFEPIDIPEANAIHLHRHHRNQALHNHNNNVNQNHNQEVNQVH.

The region spanning 38 to 105 is the BTB domain; sequence FDVTLCAEGK…CYTGRVTVTH (68 aa). Residues 140 to 242 enclose the BACK domain; sequence CLEIQDFAEA…RRFYLLAHVE (103 aa). Kelch repeat units lie at residues 289–337, 338–384, 386–424, 426–472, 474–514, and 515–562; these read ILVV…ALGN, DIYV…VLKG, LYVV…ACRG, LYAI…TLNG, IYFV…ALGG, and RLYV…SIFR.

In terms of assembly, component of the BCR(KLHL21) E3 ubiquitin ligase complex, at least composed of cul3, klhl21 and rbx1.

It localises to the cytoplasm. The protein resides in the cytoskeleton. The protein localises to the spindle. It participates in protein modification; protein ubiquitination. In terms of biological role, substrate-specific adapter of BCR (BTB-CUL3-RBX1) E3 ubiquitin-protein ligase complex required for efficient chromosome alignment and cytokinesis. The BCR(KLHL21) E3 ubiquitin ligase complex regulates localization of the chromosomal passenger complex (CPC) from chromosomes to the spindle midzone in anaphase and mediates the ubiquitination of AURKB. The chain is Kelch-like protein 21 (klhl21) from Danio rerio (Zebrafish).